Here is a 537-residue protein sequence, read N- to C-terminus: Tegument protein BRRF2 (537 aa).

2 disordered regions span residues 325-474 and 486-537; these read LALP…EAQD and GLRV…LSVI. Polar residues predominate over residues 334 to 347; sequence KPQQTCSQLTSRGN. Residues 423–441 show a composition bias toward low complexity; that stretch reads SSQAAPSSSSVAPVASLSG. The segment covering 492 to 517 has biased composition (acidic residues); it reads DEDEDGSEDGEFSDLDLSDSDHEGDE.

It belongs to the lymphocryptovirus BRRF2 family.

The protein resides in the virion tegument. The sequence is that of Tegument protein BRRF2 from Homo sapiens (Human).